Here is a 250-residue protein sequence, read N- to C-terminus: UPF0524 protein C3orf70 homolog (250 aa).

The segment at 201 to 250 is disordered; that stretch reads ESCDEDTEEGAELSSEEDYSPESSWEPDECTLLSPSQSDLEVIETIETTV. Acidic residues predominate over residues 202–229; it reads SCDEDTEEGAELSSEEDYSPESSWEPDE.

This sequence belongs to the UPF0524 family.

Its function is as follows. May play a role in neuronal and neurobehavioral development. The sequence is that of UPF0524 protein C3orf70 homolog from Bos taurus (Bovine).